The chain runs to 1292 residues: Zinc finger protein 423 (1292 aa).

Residues 1 to 11 show a composition bias toward basic residues; it reads MSRRKQAKPRS. 3 disordered regions span residues 1–21, 33–70, and 95–125; these read MSRR…EASD, AGGL…EDVE, and AHRC…SPTQ. Basic and acidic residues predominate over residues 41–54; sequence ECDRKTSRALEDRN. Phosphoserine occurs at positions 55 and 58. A C2H2-type 1; degenerate zinc finger spans residues 75-101; that stretch reads YTCDHCQQDFESLADLTDHRAHRCPGD. The segment covering 110-125 has biased composition (polar residues); that stretch reads WVASSPSSKDVASPTQ. 7 consecutive C2H2-type zinc fingers follow at residues 146–168, 174–196, 202–224, 230–252, 271–294, 303–326, and 331–353; these read YPCQ…EQIH, FKCT…IKLH, YHCH…LKTH, FKCS…MQAH, FMCD…LTLH, LQCI…HQAH, and HKCP…LDSH. The segment at 354–407 is disordered; it reads RQPDSSNHSVSPDPVLGSVASMSSATPDSSASVERGSTPDSTLKPLRGQKKMRD. Residues 371–385 are compositionally biased toward low complexity; that stretch reads SVASMSSATPDSSAS. The C2H2-type 9; degenerate zinc finger occupies 417 to 441; sequence YSCPYCSKRDFTSLAVLEIHLKTIH. C2H2-type zinc fingers lie at residues 449–472, 488–511, and 525–548; these read HTCQ…RKLH, FHCN…RVSH, and FFCN…QQAH. The segment at 571–596 adopts a C2H2-type 13; atypical zinc-finger fold; the sequence is YSCPYCTNSPIFGSILKLTKHIKENH. The tract at residues 598–635 is disordered; sequence NIPLAHSKKSKAEQSPVSSDVEVSSPKRQRLSGSANSI. Residue serine 612 is modified to Phosphoserine. Residues 612–623 are compositionally biased toward low complexity; that stretch reads SPVSSDVEVSSP. 7 consecutive C2H2-type zinc fingers follow at residues 640 to 662, 670 to 692, 700 to 723, 728 to 751, 758 to 781, 789 to 811, and 815 to 838; these read YPCN…LKLH, QACP…LTVH, YVCE…LDMH, YHCT…AVKH, YRCT…KHSH, HKCI…ITTH, and YNCR…REKH. A C2H2-type 21; degenerate zinc finger spans residues 894 to 916; sequence YGCDICGAAYTMEVLLQNHRLRD. 3 consecutive C2H2-type zinc fingers follow at residues 938–960, 967–989, and 1028–1050; these read HKCN…LQTH, YMCP…KVTH, and FRCV…GTFH. A Phosphoserine modification is found at serine 1062. A C2H2-type 25; degenerate zinc finger spans residues 1072-1090; that stretch reads YKCALCLKEFRSKQDLVRL. 5 C2H2-type zinc fingers span residues 1128–1151, 1176–1198, 1206–1228, 1237–1260, and 1267–1290; these read LRCP…QVDH, YQCI…VANH, HECK…LIEH, FKCP…FAVH, and YDCS…MSQH. The span at 1144-1155 shows a compositional bias: basic and acidic residues; the sequence is ESHMQVDHRDLT. The interval 1144-1171 is disordered; it reads ESHMQVDHRDLTPETSGPRKGAQTSPVP.

It belongs to the krueppel C2H2-type zinc-finger protein family. In terms of assembly, homodimer. Interacts with SMAD1 and SMAD4. Interacts with EBF1. Interacts with PARP1. Interacts with CEP290. Within the cerebellum, Zfp423 is expressed in both ventricular and external germinal zones. Transiently expressed in newly differentiating olfactory-receptor neurons.

Its subcellular location is the nucleus. Transcription factor that can both act as an activator or a repressor depending on the context. Plays a central role in BMP signaling and olfactory neurogenesis. Associates with SMADs in response to BMP2 leading to activate transcription of BMP target genes. Acts as a transcriptional repressor via its interaction with EBF1, a transcription factor involved in terminal olfactory receptor neurons differentiation; this interaction preventing EBF1 to bind DNA and activate olfactory-specific genes. Involved in olfactory neurogenesis by participating in a developmental switch that regulates the transition from differentiation to maturation in olfactory receptor neurons. Controls proliferation and differentiation of neural precursors in cerebellar vermis formation. In Mus musculus (Mouse), this protein is Zinc finger protein 423 (Znf423).